Here is a 185-residue protein sequence, read N- to C-terminus: MISVNDFRTGLTIAVDNGLWQVLDFQHVKPGKGAAFVRSKLRNLRTGSVQEKTFRAGEKVEKAHIENRRMQYLYASGEAHVFMDNGTYEQIELGEKQIERELKFLKENMEVSIMTYQGEVLGVELPNTVELQVTETEPGIKGDTASNVTKPATLETGLVVQVPIFINEGETLIINTGEGKYVSRA.

It belongs to the elongation factor P family.

It is found in the cytoplasm. The protein operates within protein biosynthesis; polypeptide chain elongation. In terms of biological role, involved in peptide bond synthesis. Stimulates efficient translation and peptide-bond synthesis on native or reconstituted 70S ribosomes in vitro. Probably functions indirectly by altering the affinity of the ribosome for aminoacyl-tRNA, thus increasing their reactivity as acceptors for peptidyl transferase. The sequence is that of Elongation factor P from Bacillus cereus (strain 03BB102).